The primary structure comprises 1189 residues: Zinc finger CCCH domain-containing protein 6 (1189 aa).

Over residues 1-12 (MTDSEHAGHDRE) the composition is skewed to basic and acidic residues. Residues 1–105 (MTDSEHAGHD…HKKRTGFYRD (105 aa)) form a disordered region. Residues 13–28 (DGELEDGEIDDAGFEE) show a composition bias toward acidic residues. Positions 27 to 73 (EEIQEKEAKENEKQKSEKAYRKSRKKHKKEREKKKSKRRKREKHKHN) form a coiled coil. Residues 29 to 46 (IQEKEAKENEKQKSEKAY) are compositionally biased toward basic and acidic residues. Over residues 47–73 (RKSRKKHKKEREKKKSKRRKREKHKHN) the composition is skewed to basic residues. C3H1-type zinc fingers lie at residues 273–299 (KGKQ…HDAE), 301–328 (EKRK…HNEF), and 329–352 (PCKF…HDDL). A coiled-coil region spans residues 353 to 385 (TKETKKLLDKVLNTDEELINEDERELEELRKRG). Disordered regions lie at residues 451-530 (FYTS…GPQN), 630-659 (PPVV…PVPG), 676-755 (YQED…GNQV), 947-1026 (LEQF…PYAP), and 1051-1189 (PRDH…SPFC). Positions 461-478 (QFQGSSPHPQHIYSSGSS) are enriched in low complexity. The segment covering 505 to 525 (AGPPGLPVPQSPPLPPGPPEI) has biased composition (pro residues). Positions 639 to 659 (HGSGSDGSSTRTGHGPLPVPG) are enriched in low complexity. Positions 718–741 (KTLQKQTETLRNQQQPSTELSTPT) are enriched in polar residues. Over residues 961 to 973 (GDPRLQKNFDPRL) the composition is skewed to basic and acidic residues. Low complexity-rich tracts occupy residues 1009–1020 (SGAGTSNSGSGA) and 1056–1069 (SSST…SSGE). Ser1158 is modified (phosphoserine). Positions 1164-1179 (DPGRETDDKSLKEVFK) are enriched in basic and acidic residues.

The protein is Zinc finger CCCH domain-containing protein 6 (ZC3H6) of Homo sapiens (Human).